The sequence spans 236 residues: Glyoxalase 3 (236 aa).

Catalysis depends on residues Cys136, His137, and Glu168. Cys136 carries the cysteine sulfinic acid (-SO2H) modification.

It belongs to the peptidase C56 family. HSP31-like subfamily. In terms of assembly, monomer.

It catalyses the reaction methylglyoxal + H2O = (R)-lactate + H(+). Its function is as follows. Catalyzes the conversion of methylglyoxal (MG) to D-lactate in a single glutathione (GSH)-independent step. Selective for MG, does not use glyoxal as substrate. Plays a role in detoxifying endogenously produced MG, particularly when glycerol is the principal carbon source. Important for viability in stationary phase. The sequence is that of Glyoxalase 3 from Candida albicans (strain SC5314 / ATCC MYA-2876) (Yeast).